Here is a 120-residue protein sequence, read N- to C-terminus: NAD(P)H-quinone oxidoreductase subunit 3 (120 aa).

The next 3 helical transmembrane spans lie at 10 to 30, 64 to 84, and 89 to 109; these read FLGFLLIAAAVPVLALVTNLI, MFALVFVIFDVETVFLYPWAV, and LGLLAFIEALIFIAILVIALA.

It belongs to the complex I subunit 3 family. NDH-1 can be composed of about 15 different subunits; different subcomplexes with different compositions have been identified which probably have different functions.

It localises to the cellular thylakoid membrane. It carries out the reaction a plastoquinone + NADH + (n+1) H(+)(in) = a plastoquinol + NAD(+) + n H(+)(out). It catalyses the reaction a plastoquinone + NADPH + (n+1) H(+)(in) = a plastoquinol + NADP(+) + n H(+)(out). Functionally, NDH-1 shuttles electrons from an unknown electron donor, via FMN and iron-sulfur (Fe-S) centers, to quinones in the respiratory and/or the photosynthetic chain. The immediate electron acceptor for the enzyme in this species is believed to be plastoquinone. Couples the redox reaction to proton translocation, and thus conserves the redox energy in a proton gradient. Cyanobacterial NDH-1 also plays a role in inorganic carbon-concentration. This chain is NAD(P)H-quinone oxidoreductase subunit 3, found in Prochlorococcus marinus (strain MIT 9301).